The primary structure comprises 204 residues: 8-oxoguanine DNA glycosylase/AP lyase (204 aa).

Residues lysine 128 and aspartate 146 contribute to the active site.

The protein belongs to the type-2 OGG1 family.

It catalyses the reaction 2'-deoxyribonucleotide-(2'-deoxyribose 5'-phosphate)-2'-deoxyribonucleotide-DNA = a 3'-end 2'-deoxyribonucleotide-(2,3-dehydro-2,3-deoxyribose 5'-phosphate)-DNA + a 5'-end 5'-phospho-2'-deoxyribonucleoside-DNA + H(+). Functionally, catalyzes the excision of an oxidatively damaged form of guanine (7,8-dihydro-8-oxoguanine = 8-oxoG) from DNA. Also cleaves the DNA backbone at apurinic/apyrimidinic sites (AP sites). This Sulfurisphaera tokodaii (strain DSM 16993 / JCM 10545 / NBRC 100140 / 7) (Sulfolobus tokodaii) protein is 8-oxoguanine DNA glycosylase/AP lyase.